Here is a 467-residue protein sequence, read N- to C-terminus: Fumarate hydratase class II (467 aa).

Residues 98 to 100, Arg-126, 129 to 132, 139 to 141, and Thr-187 contribute to the substrate site; these read SGT, HPND, and SSN. His-188 (proton donor/acceptor) is an active-site residue. Residue Ser-318 is part of the active site. Residues Ser-319 and 324-326 each bind substrate; that span reads KVN.

It belongs to the class-II fumarase/aspartase family. Fumarase subfamily. Homotetramer.

It localises to the cytoplasm. It catalyses the reaction (S)-malate = fumarate + H2O. It participates in carbohydrate metabolism; tricarboxylic acid cycle; (S)-malate from fumarate: step 1/1. Involved in the TCA cycle. Catalyzes the stereospecific interconversion of fumarate to L-malate. This chain is Fumarate hydratase class II, found in Salmonella typhi.